The chain runs to 201 residues: FMN-dependent NADH:quinone oxidoreductase (201 aa).

Residue 92–95 (MWNL) coordinates FMN.

It belongs to the azoreductase type 1 family. Homodimer. FMN is required as a cofactor.

The enzyme catalyses 2 a quinone + NADH + H(+) = 2 a 1,4-benzosemiquinone + NAD(+). It catalyses the reaction N,N-dimethyl-1,4-phenylenediamine + anthranilate + 2 NAD(+) = 2-(4-dimethylaminophenyl)diazenylbenzoate + 2 NADH + 2 H(+). Its function is as follows. Quinone reductase that provides resistance to thiol-specific stress caused by electrophilic quinones. Functionally, also exhibits azoreductase activity. Catalyzes the reductive cleavage of the azo bond in aromatic azo compounds to the corresponding amines. The chain is FMN-dependent NADH:quinone oxidoreductase from Caldicellulosiruptor saccharolyticus (strain ATCC 43494 / DSM 8903 / Tp8T 6331).